The sequence spans 128 residues: MLIEVLKSKIHRATVTEANLNYVGSITIDEELMEAAGILENEKVQVVNINNGERFETYVIKGERGSGTICLNGAAARLVQVGDKVIIMAYCLLTMEEYKTHMPKIVFVDDNNKIVKLSNKEEHSECLC.

Ser25 acts as the Schiff-base intermediate with substrate; via pyruvic acid in catalysis. Position 25 is a pyruvic acid (Ser) (Ser25). Thr57 serves as a coordination point for substrate. The active-site Proton donor is the Tyr58. 73–75 (GAA) contacts substrate.

Belongs to the PanD family. As to quaternary structure, heterooctamer of four alpha and four beta subunits. Pyruvate is required as a cofactor. Is synthesized initially as an inactive proenzyme, which is activated by self-cleavage at a specific serine bond to produce a beta-subunit with a hydroxyl group at its C-terminus and an alpha-subunit with a pyruvoyl group at its N-terminus.

It is found in the cytoplasm. The enzyme catalyses L-aspartate + H(+) = beta-alanine + CO2. It participates in cofactor biosynthesis; (R)-pantothenate biosynthesis; beta-alanine from L-aspartate: step 1/1. In terms of biological role, catalyzes the pyruvoyl-dependent decarboxylation of aspartate to produce beta-alanine. The polypeptide is Aspartate 1-decarboxylase (Caldicellulosiruptor saccharolyticus (strain ATCC 43494 / DSM 8903 / Tp8T 6331)).